Reading from the N-terminus, the 465-residue chain is Cysteine--tRNA ligase (465 aa).

Cys29 serves as a coordination point for Zn(2+). The short motif at 31 to 41 (PTVYNYIHIGN) is the 'HIGH' region element. Cys209, His234, and Glu238 together coordinate Zn(2+). The 'KMSKS' region signature appears at 266–270 (KMSKS). Lys269 lines the ATP pocket. Ser270 carries the post-translational modification Phosphoserine.

This sequence belongs to the class-I aminoacyl-tRNA synthetase family. In terms of assembly, monomer. Requires Zn(2+) as cofactor.

It is found in the cytoplasm. It catalyses the reaction tRNA(Cys) + L-cysteine + ATP = L-cysteinyl-tRNA(Cys) + AMP + diphosphate. The chain is Cysteine--tRNA ligase from Bacillus cereus (strain 03BB102).